A 699-amino-acid chain; its full sequence is Mannan-binding lectin serine protease 1 (699 aa).

The first 19 residues, 1-19, serve as a signal peptide directing secretion; that stretch reads MRWLLLYYALCFSLSKASA. One can recognise a CUB 1 domain in the interval 20-138; that stretch reads HTVELNNMFG…TGFDAHYMAV (119 aa). The interval 20-184 is homodimerization; sequence HTVELNNMFG…HTDNRTCRVE (165 aa). The interval 20-184 is interaction with MBL2; sequence HTVELNNMFG…HTDNRTCRVE (165 aa). The interaction with FCN2 stretch occupies residues 20–278; the sequence is HTVELNNMFG…STQSHSVLIL (259 aa). N-linked (GlcNAc...) asparagine glycosylation is present at N49. Residues E68, D76, D121, S123, D139, V140, and E142 each coordinate Ca(2+). C73 and C91 are oxidised to a cystine. One can recognise an EGF-like; calcium-binding domain in the interval 139 to 182; the sequence is DVDECKEREDEELSCDHYCHNYIGGYYCSCRFGYILHTDNRTCR. 4 cysteine pairs are disulfide-bonded: C143–C157, C153–C166, C168–C181, and C185–C212. Residues N159, Y160, and G163 each contribute to the Ca(2+) site. N159 carries the (3R)-3-hydroxyasparagine modification. The N-linked (GlcNAc...) (complex) asparagine glycan is linked to N178. The region spanning 185-297 is the CUB 2 domain; sequence CSDNLFTQRT…RGWRLSYRAA (113 aa). Ca(2+) contacts are provided by E235, D245, D282, and S284. Residues C242 and C260 are joined by a disulfide bond. Sushi domains are found at residues 299-364 and 365-434; these read NECP…TCKI and VDCR…TCLP. Disulfide bonds link C301-C349, C329-C362, C367-C414, C397-C432, C436-C572, and C475-C491. The N-linked (GlcNAc...) (complex) asparagine glycan is linked to N385. An N-linked (GlcNAc...) asparagine glycan is attached at N407. The Peptidase S1 domain occupies 449 to 696; the sequence is IFNGRPAQKG…NKDWIQRVTG (248 aa). Catalysis depends on H490, which acts as the Charge relay system. The N-linked (GlcNAc) asparagine glycan is linked to L533. D552 (charge relay system) is an active-site residue. E599 is a glycosylation site (N-linked (GlcNAc) asparagine). Intrachain disulfides connect C614-C631 and C642-C672. The active-site Charge relay system is the S646.

This sequence belongs to the peptidase S1 family. Homodimer. Interacts with the oligomeric lectins MBL2, FCN2 and FCN3; triggers the lectin pathway of complement through activation of C3. Interacts with SERPING1. Interacts with COLEC11; probably triggers the lectin pathway of complement. In terms of processing, the iron and 2-oxoglutarate dependent 3-hydroxylation of aspartate and asparagine is (R) stereospecific within EGF domains. Post-translationally, N-glycosylated. Some N-linked glycan are of the complex-type. Autoproteolytic processing of the proenzyme produces the active enzyme composed on the heavy and the light chain held together by a disulfide bond. Isoform 1 but not isoform 2 is activated through autoproteolytic processing. As to expression, protein of the plasma which is primarily expressed by liver.

The protein resides in the secreted. Its activity is regulated as follows. Inhibited by SERPING1 and A2M. Functionally, functions in the lectin pathway of complement, which performs a key role in innate immunity by recognizing pathogens through patterns of sugar moieties and neutralizing them. The lectin pathway is triggered upon binding of mannan-binding lectin (MBL) and ficolins to sugar moieties which leads to activation of the associated proteases MASP1 and MASP2. Functions as an endopeptidase and may activate MASP2 or C2 or directly activate C3 the key component of complement reaction. Isoform 2 may have an inhibitory effect on the activation of the lectin pathway of complement or may cleave IGFBP5. Also plays a role in development. The sequence is that of Mannan-binding lectin serine protease 1 (MASP1) from Homo sapiens (Human).